We begin with the raw amino-acid sequence, 1008 residues long: PWWP domain-containing protein 3 (1008 aa).

Residues 78–122 (VSSLLKLKEDVEEEEEEEEEEEEEEEDGEDEEEEEEEEEEEEEEE) adopt a coiled-coil conformation. A disordered region spans residues 84–124 (LKEDVEEEEEEEEEEEEEEEDGEDEEEEEEEEEEEEEEEHG). Acidic residues predominate over residues 87–122 (DVEEEEEEEEEEEEEEEDGEDEEEEEEEEEEEEEEE). One can recognise a PWWP domain in the interval 127–188 (VGDFVWGKIK…ASQLKPFAES (62 aa)). Disordered stretches follow at residues 307–339 (EYHE…GLQW), 399–606 (ETEP…LGQE), and 668–874 (NHKF…GPGS). The span at 321–330 (NNDDDDDDEE) shows a compositional bias: acidic residues. Basic and acidic residues predominate over residues 399–409 (ETEPADGDVKS). Residues 473–490 (DDGDDDGSGDKEESEEKE) are compositionally biased toward acidic residues. Composition is skewed to basic and acidic residues over residues 511 to 522 (RFDDSVVERSTE), 677 to 687 (SSDKEKEELSE), and 707 to 725 (QKAE…TDKH). The span at 726-738 (GKMKKERKRKKSE) shows a compositional bias: basic residues. 3 stretches are compositionally biased toward basic and acidic residues: residues 739–758 (SKKE…ESTK), 768–787 (SKKQ…ESTK), and 794–818 (NPES…ESTK). 3 consecutive short sequence motifs (nuclear localization signal) follow at residues 786 to 793 (TKKERKRK), 809 to 816 (TRKESVES), and 841 to 848 (EKKKKKKR). The stretch at 804-824 (VEEEETRKESVESTKKERKRK) forms a coiled coil. Residues 842–854 (KKKKKKREGKSKK) show a composition bias toward basic residues.

Belongs to the PDP family. As to quaternary structure, interacts with DEK3. Binds to LHP1, MSI4/FVE and MSI5. Component of the PRC2 (polycomb repressive complex 2) complex which regulates histone methylation on histone H3K27.

It localises to the nucleus. Its function is as follows. Together with PDP1, PDP2 and PDP6, interacts with MSI4/FVE and MSI5 to suppress FLC, MAF4 and MAF5 expression by regulating the function of the PRC2 complex and modulating H3K27me3 level, thereby promoting flowering. The protein is PWWP domain-containing protein 3 of Arabidopsis thaliana (Mouse-ear cress).